The primary structure comprises 670 residues: Solute carrier organic anion transporter family member 1A1 (670 aa).

Topologically, residues 1–20 (MEETEKKVATQEGRFFSKMK) are cytoplasmic. The helical transmembrane segment at 21–40 (VFLMSLTCAYLAKSLSGVYM) threads the bilayer. The Extracellular portion of the chain corresponds to 41–59 (NSMLTQIERQFGIPTSVVG). A helical transmembrane segment spans residues 60 to 80 (FITGSFEIGNLLLIVFVSYFG). At 81–86 (RKLHRP) the chain is on the cytoplasmic side. The chain crosses the membrane as a helical span at residues 87-111 (IIIGVGCVVMGLGCFLMASPHFLMG). Residues 112–155 (RYKYETTISPTSNLSSNSFLCIENRTQTLKPTQDPTECVKEIKS) are Extracellular-facing. Residues asparagine 124 and asparagine 135 are each glycosylated (N-linked (GlcNAc...) asparagine). Residues 156–184 (LMWIYVLIGNTMRGIGETPIMPLGISYIE) form a helical membrane-spanning segment. Topologically, residues 185–203 (DFAKSENSPLYIGILEMGK) are cytoplasmic. Residues 204–224 (IVGPIIGLLLGSFFARVYVDI) traverse the membrane as a helical segment. Topologically, residues 225–242 (GSVNTDDLTITPTDTRWV) are extracellular. Residues 243-267 (GAWWIGFLVCAGVNILTSIPFFFFP) form a helical membrane-spanning segment. Over 268–311 (KTLPKKELQDNVDVTKYEKVEKHRERAKKENLGITKDFLPFMKS) the chain is Cytoplasmic. Residues 312–333 (LCCNPIYMLFSLTSVLQINGFA) form a helical membrane-spanning segment. At 334-353 (STFTFLPKYLEQQYGKSTSE) the chain is on the extracellular side. Residues 354–377 (AVFLIGVYSLPPVCLGYLISGFIM) traverse the membrane as a helical segment. At 378-381 (KKFK) the chain is on the cytoplasmic side. The helical transmembrane segment at 382–405 (ITVKKAAYIAFGLSLSEYFIFLCN) threads the bilayer. Residues 406–513 (YLLTCDNFPV…PECDNKLQYF (108 aa)) are Extracellular-facing. Residues 433-488 (KNVLADCNTRCSCLTDTWDPVCGDNGLAYMSACLAGCEKSVGTGTNMVFQNCSCIG) form the Kazal-like domain. 3 cysteine pairs are disulfide-bonded: cysteine 439–cysteine 469, cysteine 445–cysteine 465, and cysteine 454–cysteine 486. 2 N-linked (GlcNAc...) asparagine glycosylation sites follow: asparagine 483 and asparagine 492. A helical membrane pass occupies residues 514–536 (LIKSVFSSFIFSLAAIPGYMVLL). Residues 537 to 545 (RCVKSEEKS) lie on the Cytoplasmic side of the membrane. A helical transmembrane segment spans residues 546 to 571 (IGVGLHAFFIRLLAGIPAPVYFGALI). Residues 572–605 (DRTCLHWGTLKCGQPGACRMYDINRFRHIYLGLP) are Extracellular-facing. A helical membrane pass occupies residues 606-623 (AAVRGSSFLPAVFILILM). Topologically, residues 624–670 (RKFHFPGDIHSPDTELAEMKLTEKESECTDVCRSPKVENDGELKTKL) are cytoplasmic. A Phosphoserine modification is found at serine 634.

This sequence belongs to the organo anion transporter (TC 2.A.60) family. Binds to PDZK1. Interaction with PDZK1 is required for expression on hepatocyte surface. As to expression, highly expressed in liver, and at lower levels in kidney. Not detected in other tissues.

The protein localises to the basolateral cell membrane. The catalysed reaction is estrone 3-sulfate(out) + hydrogencarbonate(in) = estrone 3-sulfate(in) + hydrogencarbonate(out). It catalyses the reaction taurocholate(out) + hydrogencarbonate(in) = taurocholate(in) + hydrogencarbonate(out). It carries out the reaction L-thyroxine(out) = L-thyroxine(in). The enzyme catalyses prostaglandin E2(out) = prostaglandin E2(in). The catalysed reaction is 17beta-estradiol 17-O-(beta-D-glucuronate)(out) = 17beta-estradiol 17-O-(beta-D-glucuronate)(in). It catalyses the reaction dehydroepiandrosterone 3-sulfate(out) = dehydroepiandrosterone 3-sulfate(in). Mediates the Na(+)-independent transport of organic anions such as steroid sulfate conjugates (dehydroepiandrosterone sulfate (DHEAS), 17-beta-glucuronosyl estradiol, estrone-3-sulfate), conjugated (taurocholate) and unconjugated (cholate) bile acids, prostaglandin E2 (PGE2) and L-thyroxine T4. Also capable of transporting sulfobromophthalein (BSP), ouabain and gadoxetate. Hydrogencarbonate/HCO3(-) acts as the probable counteranion that exchanges for organic anions. Shows a pH-sensitive substrate specificity which may be ascribed to the protonation state of the binding site and leads to a stimulation of substrate transport in an acidic microenvironment. The sequence is that of Solute carrier organic anion transporter family member 1A1 from Mus musculus (Mouse).